The chain runs to 1358 residues: Phosphoinositide 3-kinase regulatory subunit 4 (1358 aa).

Gly-2 carries N-myristoyl glycine lipidation. A Protein kinase domain is found at 26-324 (FEYDKSLGST…AFPEIFYTFL (299 aa)). Residues 32–40 (LGSTRFFKV) and Lys-53 each bind ATP. Residue Asp-148 is the Proton acceptor of the active site. HEAT repeat units lie at residues 413–450 (ILLDRITPYLLHFSNDSVPRVRAEALRTLTKVLALVKE), 458–495 (IYPEYILPGIAHLAQDDATIVRLAYAENIALLAETALR), and 572–610 (KANDVLLSHMITFLNDKNDWHLRGAFFDSIVGVAAYVGW). 4 positions are modified to phosphoserine: Ser-808, Ser-813, Ser-853, and Ser-865. The segment at 875–898 (LPKGSDQEVIQTGKPPRSESSAGI) is disordered. 6 WD repeats span residues 991-1030 (EHKSAVNRIRVSDEHSLFATCSNDGTVKIWNSQKMEGKTT), 1040-1079 (RIGGRVKTLTFCQGSHYLAIASDNGAVQLLGIEASKLPKS), 1093-1134 (KEDG…NAWT), 1139-1178 (LKSGLITSFAVDIHQCWLCIGTSSGTMACWDMRFQLPISS), 1182-1223 (PSRA…RRFT), and 1237-1278 (PSPH…RSYV). Residues 1307-1326 (KQKVGPSDDTPRRGPESLPV) form a disordered region. Basic and acidic residues predominate over residues 1315–1326 (DTPRRGPESLPV). Thr-1316 bears the Phosphothreonine mark. A WD 7 repeat occupies 1327-1358 (GHHDIITDVATFQTTQGFIVTASRDGIVKVWK).

The protein belongs to the protein kinase superfamily. Ser/Thr protein kinase family. Component of the PI3K (PI3KC3/PI3K-III/class III phosphatidylinositol 3-kinase) complex the core of which is composed of the catalytic subunit PIK3C3, the regulatory subunit PIK3R4 and BECN1 associating with additional regulatory/auxiliary subunits to form alternative complex forms. Alternative complex forms containing a fourth regulatory subunit in a mutually exclusive manner are PI3K complex I (PI3KC3-C1) containing ATG14, and PI3K complex II (PI3KC3-C2) containing UVRAG. PI3KC3-C1 displays a V-shaped architecture with PIK3R4 serving as a bridge between PIK3C3 and the ATG14:BECN1 subcomplex. Both, PI3KC3-C1 and PI3KC3-C2, can associate with further regulatory subunits, such as RUBCN, SH3GLB1/Bif-1, AMBRA1 and NRBF2. PI3KC3-C1 probably associates with PIK3CB. Interacts with RAB7A in the presence of PIK3C3/VPS34. Interacts with NRBF2. Interacts with ARMC3. It depends on Mn(2+) as a cofactor. Myristoylated. Post-translationally, probably autophosphorylated. Ubiquitously expressed.

Its subcellular location is the late endosome. It is found in the cytoplasmic vesicle. It localises to the autophagosome. The protein localises to the membrane. It catalyses the reaction L-seryl-[protein] + ATP = O-phospho-L-seryl-[protein] + ADP + H(+). It carries out the reaction L-threonyl-[protein] + ATP = O-phospho-L-threonyl-[protein] + ADP + H(+). In terms of biological role, regulatory subunit of the PI3K complex that mediates formation of phosphatidylinositol 3-phosphate; different complex forms are believed to play a role in multiple membrane trafficking pathways: PI3KC3-C1 is involved in initiation of autophagosomes and PI3KC3-C2 in maturation of autophagosomes and endocytosis. Involved in regulation of degradative endocytic trafficking and cytokinesis, probably in the context of PI3KC3-C2. This chain is Phosphoinositide 3-kinase regulatory subunit 4 (PIK3R4), found in Homo sapiens (Human).